Reading from the N-terminus, the 694-residue chain is Nucleolin (694 aa).

Positions 1–277 (MVKLAKTPKN…EAKKKKTETP (277 aa)) are disordered. Over residues 26–40 (ESEEEESSDLEESSG) the composition is skewed to acidic residues. The span at 46-108 (PPKKQQKAAV…AVVGKGAKNG (63 aa)) shows a compositional bias: low complexity. 5 repeat units span residues 55–61 (VTPAKKA), 62–68 (ATPAKKA), 69–75 (ATPAKKA), 76–82 (VTPAKKA), and 84–90 (ATPAKKA). Residues 55–90 (VTPAKKAATPAKKAATPAKKAVTPAKKAVATPAKKA) form a 5 X 7 AA tandem repeats of X-T-P-X-K-K-X region. Residues S116 and S136 each carry the phosphoserine modification. Over residues 116–142 (SEEEDEDDEDDEEDEDEEEESDEEEEP) the composition is skewed to acidic residues. Residues 143–168 (AVPVKPAAKKSAAAVPAKKPAVVPAK) are compositionally biased toward low complexity. At S171 the chain carries Phosphoserine. The segment covering 171-194 (SEEEEEEDDEEEDEEDDESEDEAM) has biased composition (acidic residues). Residues 196-213 (TTPAPVKKPTPAKATPAK) are compositionally biased toward low complexity. The span at 218-246 (SEDEEDEEDEDEDEEDEDDEEEDEEESED) shows a compositional bias: acidic residues. 4 consecutive RRM domains span residues 281–357 (FSLF…KAKS), 371–445 (RTLF…YTGE), 461–535 (KTLI…FSSP), and 553–628 (KTLF…FAKP). Positions 631–694 (EFQRGGGFGG…KPQGKKIKFE (64 aa)) are disordered. Residues 633–680 (QRGGGFGGGFGGRGGRGGRGGGRGGFGGRGGGRGFGGRGGGFRGGRGG) are compositionally biased toward gly residues. Positions 681-694 (GGDHKPQGKKIKFE) are enriched in basic and acidic residues.

In terms of processing, highly phosphorylated during mitosis.

It localises to the nucleus. It is found in the nucleolus. Functionally, nucleolin is the major nucleolar protein of growing eukaryotic cells. It is found associated with intranucleolar chromatin and pre-ribosomal particles. It induces chromatin decondensation by binding to histone H1. It is thought to play a role in pre-rRNA transcription and ribosome assembly. In Gallus gallus (Chicken), this protein is Nucleolin (NCL).